Here is a 209-residue protein sequence, read N- to C-terminus: MGKKKRSASSSRWLNEHFSDQFVQKAHKQKLRSRAYFKIDEIQQTDKLFKQGMTVVDLGAAPGGWSQYVVSQIGGKGRVIACDILEMDPIVGVDFLQGDFRDENVLNALLARVGEDKVDVVMSDMAPNFSGMPSVDIPRAMYLVELALDMCKQVLASKGSFVVKVFQGEGFDEYLREIRSLFDVVKVRKPEASRGRSREVYIVATGYKG.

S-adenosyl-L-methionine-binding residues include Gly63, Trp65, Asp83, Asp99, and Asp124. Lys164 functions as the Proton acceptor in the catalytic mechanism. Positions Glu191–Gly209 constitute a TRAM domain.

Belongs to the class I-like SAM-binding methyltransferase superfamily. RNA methyltransferase RlmE family.

Its subcellular location is the cytoplasm. The enzyme catalyses uridine(2552) in 23S rRNA + S-adenosyl-L-methionine = 2'-O-methyluridine(2552) in 23S rRNA + S-adenosyl-L-homocysteine + H(+). Functionally, specifically methylates the uridine in position 2552 of 23S rRNA at the 2'-O position of the ribose in the fully assembled 50S ribosomal subunit. This chain is Ribosomal RNA large subunit methyltransferase E, found in Haemophilus influenzae (strain ATCC 51907 / DSM 11121 / KW20 / Rd).